Here is a 958-residue protein sequence, read N- to C-terminus: Valine--tRNA ligase (958 aa).

Positions 45–55 (PNVTGSLHMGH) match the 'HIGH' region motif. The 'KMSKS' region motif lies at 571 to 575 (KMSKS). An ATP-binding site is contributed by Lys574. The stretch at 892–958 (AAERTRLDKE…EALERLKQAS (67 aa)) forms a coiled coil.

It belongs to the class-I aminoacyl-tRNA synthetase family. ValS type 1 subfamily. As to quaternary structure, monomer.

It localises to the cytoplasm. It carries out the reaction tRNA(Val) + L-valine + ATP = L-valyl-tRNA(Val) + AMP + diphosphate. Functionally, catalyzes the attachment of valine to tRNA(Val). As ValRS can inadvertently accommodate and process structurally similar amino acids such as threonine, to avoid such errors, it has a 'posttransfer' editing activity that hydrolyzes mischarged Thr-tRNA(Val) in a tRNA-dependent manner. The polypeptide is Valine--tRNA ligase (Bradyrhizobium diazoefficiens (strain JCM 10833 / BCRC 13528 / IAM 13628 / NBRC 14792 / USDA 110)).